Consider the following 977-residue polypeptide: AP-2 complex subunit alpha-1 (977 aa).

The interval 614 to 702 is disordered; sequence AKLKRKKGPG…PSLGPTPEEA (89 aa). A phosphoserine mark is found at serine 626 and serine 652. The segment covering 646–657 has biased composition (low complexity); that stretch reads PTPSTVSTPSPS. Threonine 653 bears the Phosphothreonine mark. At serine 655 the chain carries Phosphoserine. The segment covering 666 to 675 has biased composition (pro residues); that stretch reads APPPAAPPAP.

The protein belongs to the adaptor complexes large subunit family. In terms of assembly, adaptor protein complex 2 (AP-2) is a heterotetramer composed of two large adaptins (alpha-type subunit AP2A1 or AP2A2 and beta-type subunit AP2B1), a medium adaptin (mu-type subunit AP2M1) and a small adaptin (sigma-type subunit AP2S1). Interacts with HIP1 and RAB11FIP2. Interacts with SLC12A5. Interacts with clathrin. Interacts with SGIP1. Interacts with RFTN1. Interacts with KIAA1107. Interacts with PICALM. Together with AP2B1 and AP2M1, it interacts with ADAM10; this interaction facilitates ADAM10 endocytosis from the plasma membrane during long-term potentiation in hippocampal neurons. Interacts with ABCB11; this interaction regulates cell membrane expression of ABCB11 through its internalization in a clathrin-dependent manner and its subsequent degradation. Probably interacts with ACE2 (via endocytic sorting signal motif); the interaction is inhibited by ACE2 phosphorylation. Expressed in the brain (at protein level). Isoform A: Expressed only in neuronal tissue and skeletal muscle. Isoform B: Widely expressed.

It localises to the cell membrane. The protein localises to the membrane. It is found in the coated pit. Functionally, component of the adaptor protein complex 2 (AP-2). Adaptor protein complexes function in protein transport via transport vesicles in different membrane traffic pathways. Adaptor protein complexes are vesicle coat components and appear to be involved in cargo selection and vesicle formation. AP-2 is involved in clathrin-dependent endocytosis in which cargo proteins are incorporated into vesicles surrounded by clathrin (clathrin-coated vesicles, CCVs) which are destined for fusion with the early endosome. The clathrin lattice serves as a mechanical scaffold but is itself unable to bind directly to membrane components. Clathrin-associated adaptor protein (AP) complexes which can bind directly to both the clathrin lattice and to the lipid and protein components of membranes are considered to be the major clathrin adaptors contributing the CCV formation. AP-2 also serves as a cargo receptor to selectively sort the membrane proteins involved in receptor-mediated endocytosis. AP-2 seems to play a role in the recycling of synaptic vesicle membranes from the presynaptic surface. AP-2 recognizes Y-X-X-[FILMV] (Y-X-X-Phi) and [ED]-X-X-X-L-[LI] endocytosis signal motifs within the cytosolic tails of transmembrane cargo molecules. AP-2 may also play a role in maintaining normal post-endocytic trafficking through the ARF6-regulated, non-clathrin pathway. The AP-2 alpha subunit binds polyphosphoinositide-containing lipids, positioning AP-2 on the membrane. During long-term potentiation in hippocampal neurons, AP-2 is responsible for the endocytosis of ADAM10. The AP-2 alpha subunit acts via its C-terminal appendage domain as a scaffolding platform for endocytic accessory proteins. The AP-2 alpha and AP-2 sigma subunits are thought to contribute to the recognition of the [ED]-X-X-X-L-[LI] motif. The protein is AP-2 complex subunit alpha-1 (Ap2a1) of Mus musculus (Mouse).